Reading from the N-terminus, the 423-residue chain is UPF0229 protein PLES_05841 (423 aa).

Positions 84-107 (AGEHIARPSGGGGGRGGGKASNSG) are disordered. The span at 92-102 (SGGGGGRGGGK) shows a compositional bias: gly residues.

Belongs to the UPF0229 family.

This Pseudomonas aeruginosa (strain LESB58) protein is UPF0229 protein PLES_05841.